The primary structure comprises 1663 residues: Cortactin-binding protein 2 (1663 aa).

Disordered regions lie at residues 1–23 (MATDGASCEPDLSRAPEDAAGAA), 203–222 (KKKTNELEEELSTEKRRSTE), 359–440 (QASH…LHPG), 454–478 (GNANDPDQNGNTTQSPPSRDVSPTS), and 498–617 (RFTS…KPSI). Positions 119-276 (KKMQERMSAQ…EQLKRGSDSK (158 aa)) form a coiled coil. Residues 386-396 (PSTGSTPDPTS) show a composition bias toward low complexity. Asymmetric dimethylarginine is present on arginine 498. Polar residues predominate over residues 583–593 (TVASPPSSLPQ). 6 ANK repeats span residues 709 to 739 (GRPTLLQQAAAQGNVTLLSMLLNEEGLDINY), 743 to 772 (DGHSALYSAAKNGHTDCVRLLLSAEAQVNA), 776 to 805 (NGFTPLCAAAAQGHFECVELLIAYDANINH), 809 to 838 (GGQTPLYLACKNGNKECVKLLLEAGTNRSV), 842 to 871 (DGWTPVHAAVDTGNVDSLKLLMYHRIPARG), and 912 to 942 (EGWTAAHIAASKGFKNCLEILCRHRGLEPER). A disordered region spans residues 1446–1485 (NKKKGESGAWRKVNTSPRRKSGRFSLPTWNKPDLSTEGMK). Residue serine 1524 is modified to Phosphoserine. The disordered stretch occupies residues 1580 to 1663 (SQKEVSPLSS…KNEHLEKPNK (84 aa)). Over residues 1582-1599 (KEVSPLSSHQTTECSNSK) the composition is skewed to polar residues. Residues 1624–1638 (SQNTKRSSSSSNTRQ) show a composition bias toward low complexity. Residues 1645-1663 (SKEENWNLHKNEHLEKPNK) are compositionally biased toward basic and acidic residues.

In terms of assembly, interacts with CTTN/cortactin SH3 domain. Interacts with STRN, STRN4/zinedin and MOB4/phocein; this interactions mediate the association with the STRIPAK core complex and may regulate dendritic spine distribution of the STRIPAK complex in hippocampal neurons. Activation of glutamate receptors weakens the interaction with STRN and STRN4.

Its subcellular location is the cytoplasm. The protein resides in the cell cortex. It localises to the cell projection. The protein localises to the dendritic spine. Its function is as follows. Regulates the dendritic spine distribution of CTTN/cortactin in hippocampal neurons, and thus controls dendritic spinogenesis and dendritic spine maintenance. Associates with the striatin-interacting phosphatase and kinase (STRIPAK) core complex to regulate dendritic spine distribution of the STRIPAK complex in hippocampal neurons. This is Cortactin-binding protein 2 (CTTNBP2) from Pongo abelii (Sumatran orangutan).